The sequence spans 504 residues: Glycerol kinase (504 aa).

Residue T14 coordinates ADP. 3 residues coordinate ATP: T14, T15, and S16. Residue T14 coordinates sn-glycerol 3-phosphate. R18 is an ADP binding site. Sn-glycerol 3-phosphate-binding residues include R84, E85, Y136, and D246. 5 residues coordinate glycerol: R84, E85, Y136, D246, and Q247. ADP is bound by residues T268 and G311. Residues T268, G311, Q315, and G412 each coordinate ATP. G412 and N416 together coordinate ADP.

Belongs to the FGGY kinase family.

The catalysed reaction is glycerol + ATP = sn-glycerol 3-phosphate + ADP + H(+). It functions in the pathway polyol metabolism; glycerol degradation via glycerol kinase pathway; sn-glycerol 3-phosphate from glycerol: step 1/1. With respect to regulation, inhibited by fructose 1,6-bisphosphate (FBP). Its function is as follows. Key enzyme in the regulation of glycerol uptake and metabolism. Catalyzes the phosphorylation of glycerol to yield sn-glycerol 3-phosphate. The sequence is that of Glycerol kinase from Aliivibrio fischeri (strain MJ11) (Vibrio fischeri).